The sequence spans 237 residues: NAD-dependent protein deacylase (237 aa).

The Deacetylase sirtuin-type domain maps to 1–235; it reads MRVAVLSGAG…PGLLERLPAL (235 aa). 8–28 is an NAD(+) binding site; sequence GAGISAESGVPTFRDDKNGLW. Substrate-binding residues include Tyr53 and Arg56. 86–89 contributes to the NAD(+) binding site; that stretch reads QNVD. His104 acts as the Proton acceptor in catalysis. Residues Cys112, Cys115, Cys138, and Cys140 each coordinate Zn(2+). NAD(+) is bound by residues 177–179, 203–205, and Ala221; these read GTS and NPE.

This sequence belongs to the sirtuin family. Class III subfamily. The cofactor is Zn(2+).

The protein localises to the cytoplasm. It carries out the reaction N(6)-acetyl-L-lysyl-[protein] + NAD(+) + H2O = 2''-O-acetyl-ADP-D-ribose + nicotinamide + L-lysyl-[protein]. The enzyme catalyses N(6)-succinyl-L-lysyl-[protein] + NAD(+) + H2O = 2''-O-succinyl-ADP-D-ribose + nicotinamide + L-lysyl-[protein]. In terms of biological role, NAD-dependent lysine deacetylase and desuccinylase that specifically removes acetyl and succinyl groups on target proteins. Modulates the activities of several proteins which are inactive in their acylated form. The sequence is that of NAD-dependent protein deacylase from Mycobacterium bovis (strain ATCC BAA-935 / AF2122/97).